Consider the following 101-residue polypeptide: Acylphosphatase (101 aa).

Positions 15–101 (RMYARVYGLV…KGEFEDFETY (87 aa)) constitute an Acylphosphatase-like domain. Residues R30 and N48 contribute to the active site.

This sequence belongs to the acylphosphatase family.

The enzyme catalyses an acyl phosphate + H2O = a carboxylate + phosphate + H(+). The polypeptide is Acylphosphatase (acyP) (Saccharolobus solfataricus (strain ATCC 35092 / DSM 1617 / JCM 11322 / P2) (Sulfolobus solfataricus)).